The chain runs to 238 residues: Zinc finger protein ZAT6 (238 aa).

The segment covering 1-15 (MALETLTSPRLSSPM) has biased composition (polar residues). The disordered stretch occupies residues 1 to 42 (MALETLTSPRLSSPMPTLFQDSALGFHGSKGKRSKRSRSEFD). The Nuclear localization signal motif lies at 30–38 (KGKRSKRSR). 2 C2H2-type zinc fingers span residues 89–111 (YKCS…KASH) and 148–170 (HVCS…KRCH). The tract at residues 175–202 (NGGGVSSSVSNSEDVGSTSHVSSGHRGF) is disordered. Over residues 180–193 (SSSVSNSEDVGSTS) the composition is skewed to low complexity.

The protein resides in the nucleus. Its function is as follows. Probable transcription factor that regulates root development and phosphate (Pi) acquisition and homeostasis. Probably acts as a repressor of primary root growth and regulates Pi homeostasis through the control of root architecture. The polypeptide is Zinc finger protein ZAT6 (ZAT6) (Arabidopsis thaliana (Mouse-ear cress)).